Consider the following 289-residue polypeptide: 4-hydroxy-tetrahydrodipicolinate synthase (289 aa).

Thr-44 contributes to the pyruvate binding site. Tyr-132 functions as the Proton donor/acceptor in the catalytic mechanism. Catalysis depends on Lys-161, which acts as the Schiff-base intermediate with substrate. A pyruvate-binding site is contributed by Ile-201.

It belongs to the DapA family. In terms of assembly, homotetramer; dimer of dimers.

It is found in the cytoplasm. It catalyses the reaction L-aspartate 4-semialdehyde + pyruvate = (2S,4S)-4-hydroxy-2,3,4,5-tetrahydrodipicolinate + H2O + H(+). It participates in amino-acid biosynthesis; L-lysine biosynthesis via DAP pathway; (S)-tetrahydrodipicolinate from L-aspartate: step 3/4. In terms of biological role, catalyzes the condensation of (S)-aspartate-beta-semialdehyde [(S)-ASA] and pyruvate to 4-hydroxy-tetrahydrodipicolinate (HTPA). The protein is 4-hydroxy-tetrahydrodipicolinate synthase of Methanocaldococcus jannaschii (strain ATCC 43067 / DSM 2661 / JAL-1 / JCM 10045 / NBRC 100440) (Methanococcus jannaschii).